Here is a 262-residue protein sequence, read N- to C-terminus: Tryptophan synthase alpha chain (262 aa).

Catalysis depends on proton acceptor residues Glu-48 and Asp-59.

This sequence belongs to the TrpA family. Tetramer of two alpha and two beta chains.

It catalyses the reaction (1S,2R)-1-C-(indol-3-yl)glycerol 3-phosphate + L-serine = D-glyceraldehyde 3-phosphate + L-tryptophan + H2O. It participates in amino-acid biosynthesis; L-tryptophan biosynthesis; L-tryptophan from chorismate: step 5/5. Its function is as follows. The alpha subunit is responsible for the aldol cleavage of indoleglycerol phosphate to indole and glyceraldehyde 3-phosphate. The chain is Tryptophan synthase alpha chain from Helicobacter pylori (strain P12).